A 377-amino-acid polypeptide reads, in one-letter code: Queuine tRNA-ribosyltransferase (377 aa).

Residue D93 is the Proton acceptor of the active site. Substrate-binding positions include 93-97 (DSGGF), D147, Q190, and G216. The tract at residues 247 to 253 (GVGTPDD) is RNA binding. Residue D266 is the Nucleophile of the active site. Residues 271–275 (TRAGR) form an RNA binding; important for wobble base 34 recognition region. The Zn(2+) site is built by C304, C306, C309, and H335.

This sequence belongs to the queuine tRNA-ribosyltransferase family. Homodimer. Within each dimer, one monomer is responsible for RNA recognition and catalysis, while the other monomer binds to the replacement base PreQ1. It depends on Zn(2+) as a cofactor.

The catalysed reaction is 7-aminomethyl-7-carbaguanine + guanosine(34) in tRNA = 7-aminomethyl-7-carbaguanosine(34) in tRNA + guanine. Its pathway is tRNA modification; tRNA-queuosine biosynthesis. Its function is as follows. Catalyzes the base-exchange of a guanine (G) residue with the queuine precursor 7-aminomethyl-7-deazaguanine (PreQ1) at position 34 (anticodon wobble position) in tRNAs with GU(N) anticodons (tRNA-Asp, -Asn, -His and -Tyr). Catalysis occurs through a double-displacement mechanism. The nucleophile active site attacks the C1' of nucleotide 34 to detach the guanine base from the RNA, forming a covalent enzyme-RNA intermediate. The proton acceptor active site deprotonates the incoming PreQ1, allowing a nucleophilic attack on the C1' of the ribose to form the product. After dissociation, two additional enzymatic reactions on the tRNA convert PreQ1 to queuine (Q), resulting in the hypermodified nucleoside queuosine (7-(((4,5-cis-dihydroxy-2-cyclopenten-1-yl)amino)methyl)-7-deazaguanosine). The protein is Queuine tRNA-ribosyltransferase of Granulibacter bethesdensis (strain ATCC BAA-1260 / CGDNIH1).